The primary structure comprises 358 residues: D-alanine--D-alanine ligase B (358 aa).

An ATP-grasp domain is found at 147 to 352 (KYVLENFKFK…YSALIDELIE (206 aa)). An ATP-binding site is contributed by 179-234 (VEKLQYDVFIKPANSGSSVGITKAHNKEELLKGLEEAFIHDKNVLVEEAINAREIE). Mg(2+) contacts are provided by aspartate 305, glutamate 319, and asparagine 321.

The protein belongs to the D-alanine--D-alanine ligase family. It depends on Mg(2+) as a cofactor. The cofactor is Mn(2+).

It is found in the cytoplasm. The enzyme catalyses 2 D-alanine + ATP = D-alanyl-D-alanine + ADP + phosphate + H(+). The protein operates within cell wall biogenesis; peptidoglycan biosynthesis. Cell wall formation. The polypeptide is D-alanine--D-alanine ligase B (Clostridium tetani (strain Massachusetts / E88)).